The sequence spans 266 residues: Undecaprenyl-diphosphatase (266 aa).

The next 8 membrane-spanning stretches (helical) occupy residues 1-21 (MMSW…TEFL), 43-63 (ASVF…VIYW), 81-101 (LYGI…GFLF), 107-127 (TLFT…FMLI), 145-165 (LTPK…WPGF), 183-203 (HLAA…ATGY), 219-239 (LFIT…KVFI), and 245-265 (ISLR…YLCI).

This sequence belongs to the UppP family.

The protein resides in the cell membrane. It carries out the reaction di-trans,octa-cis-undecaprenyl diphosphate + H2O = di-trans,octa-cis-undecaprenyl phosphate + phosphate + H(+). In terms of biological role, catalyzes the dephosphorylation of undecaprenyl diphosphate (UPP). Confers resistance to bacitracin. The chain is Undecaprenyl-diphosphatase from Lawsonia intracellularis (strain PHE/MN1-00).